A 137-amino-acid polypeptide reads, in one-letter code: Transcription antitermination protein NusB (137 aa).

This sequence belongs to the NusB family.

In terms of biological role, involved in transcription antitermination. Required for transcription of ribosomal RNA (rRNA) genes. Binds specifically to the boxA antiterminator sequence of the ribosomal RNA (rrn) operons. This Aeromonas salmonicida (strain A449) protein is Transcription antitermination protein NusB.